A 338-amino-acid polypeptide reads, in one-letter code: 1-aminocyclopropane-1-carboxylate deaminase (338 aa).

Residue K51 is modified to N6-(pyridoxal phosphate)lysine. S78 (nucleophile) is an active-site residue.

The protein belongs to the ACC deaminase/D-cysteine desulfhydrase family. As to quaternary structure, homotrimer. Requires pyridoxal 5'-phosphate as cofactor.

It catalyses the reaction 1-aminocyclopropane-1-carboxylate + H2O = 2-oxobutanoate + NH4(+). In terms of biological role, catalyzes a cyclopropane ring-opening reaction, the irreversible conversion of 1-aminocyclopropane-1-carboxylate (ACC) to ammonia and alpha-ketobutyrate. Allows growth on ACC as a nitrogen source. The protein is 1-aminocyclopropane-1-carboxylate deaminase of Burkholderia orbicola (strain MC0-3).